The chain runs to 125 residues: Glycine cleavage system H protein (125 aa).

A Lipoyl-binding domain is found at 22–104; the sequence is SYIIGITDFA…YDTGWILKLT (83 aa). The residue at position 63 (Lys-63) is an N6-lipoyllysine.

The protein belongs to the GcvH family. As to quaternary structure, the glycine cleavage system is composed of four proteins: P, T, L and H. (R)-lipoate is required as a cofactor.

The glycine cleavage system catalyzes the degradation of glycine. The H protein shuttles the methylamine group of glycine from the P protein to the T protein. Functionally, is also involved in protein lipoylation via its role as an octanoyl/lipoyl carrier protein intermediate. In Listeria innocua serovar 6a (strain ATCC BAA-680 / CLIP 11262), this protein is Glycine cleavage system H protein.